Consider the following 82-residue polypeptide: ATP synthase subunit c, chloroplastic (82 aa).

The next 2 membrane-spanning stretches (helical) occupy residues 3–23 (PIISAASVIAAGLAVGLAAIG) and 57–77 (LAFMESLTIYGLVVALSLLFA).

The protein belongs to the ATPase C chain family. F-type ATPases have 2 components, F(1) - the catalytic core - and F(0) - the membrane proton channel. F(1) has five subunits: alpha(3), beta(3), gamma(1), delta(1), epsilon(1). F(0) has four main subunits: a(1), b(1), b'(1) and c(10-14). The alpha and beta chains form an alternating ring which encloses part of the gamma chain. F(1) is attached to F(0) by a central stalk formed by the gamma and epsilon chains, while a peripheral stalk is formed by the delta, b and b' chains.

It localises to the plastid. It is found in the chloroplast thylakoid membrane. In terms of biological role, f(1)F(0) ATP synthase produces ATP from ADP in the presence of a proton or sodium gradient. F-type ATPases consist of two structural domains, F(1) containing the extramembraneous catalytic core and F(0) containing the membrane proton channel, linked together by a central stalk and a peripheral stalk. During catalysis, ATP synthesis in the catalytic domain of F(1) is coupled via a rotary mechanism of the central stalk subunits to proton translocation. Its function is as follows. Key component of the F(0) channel; it plays a direct role in translocation across the membrane. A homomeric c-ring of between 10-14 subunits forms the central stalk rotor element with the F(1) delta and epsilon subunits. This chain is ATP synthase subunit c, chloroplastic, found in Cyanidium caldarium (Red alga).